The primary structure comprises 178 residues: Large ribosomal subunit protein uL6 (178 aa).

The protein belongs to the universal ribosomal protein uL6 family. In terms of assembly, part of the 50S ribosomal subunit.

In terms of biological role, this protein binds to the 23S rRNA, and is important in its secondary structure. It is located near the subunit interface in the base of the L7/L12 stalk, and near the tRNA binding site of the peptidyltransferase center. This is Large ribosomal subunit protein uL6 from Wolinella succinogenes (strain ATCC 29543 / DSM 1740 / CCUG 13145 / JCM 31913 / LMG 7466 / NCTC 11488 / FDC 602W) (Vibrio succinogenes).